Reading from the N-terminus, the 529-residue chain is Bifunctional purine biosynthesis protein PurH (529 aa).

The region spanning 3–149 is the MGS-like domain; the sequence is DRIPLKRALI…KNHAFVTVVV (147 aa).

This sequence belongs to the PurH family.

It carries out the reaction (6R)-10-formyltetrahydrofolate + 5-amino-1-(5-phospho-beta-D-ribosyl)imidazole-4-carboxamide = 5-formamido-1-(5-phospho-D-ribosyl)imidazole-4-carboxamide + (6S)-5,6,7,8-tetrahydrofolate. The catalysed reaction is IMP + H2O = 5-formamido-1-(5-phospho-D-ribosyl)imidazole-4-carboxamide. It participates in purine metabolism; IMP biosynthesis via de novo pathway; 5-formamido-1-(5-phospho-D-ribosyl)imidazole-4-carboxamide from 5-amino-1-(5-phospho-D-ribosyl)imidazole-4-carboxamide (10-formyl THF route): step 1/1. It functions in the pathway purine metabolism; IMP biosynthesis via de novo pathway; IMP from 5-formamido-1-(5-phospho-D-ribosyl)imidazole-4-carboxamide: step 1/1. The polypeptide is Bifunctional purine biosynthesis protein PurH (Paracoccus denitrificans (strain Pd 1222)).